A 344-amino-acid polypeptide reads, in one-letter code: Protein-glutamate methylesterase/protein-glutamine glutaminase 1 (344 aa).

Positions 5–122 (RVLVVDDSAT…GTQEALAEIV (118 aa)) constitute a Response regulatory domain. At aspartate 56 the chain carries 4-aspartylphosphate. Residues 151 to 343 (FMPSGDIVAI…QSILDLASAR (193 aa)) form the CheB-type methylesterase domain. Residues serine 163, histidine 189, and aspartate 285 contribute to the active site.

Belongs to the CheB family. Post-translationally, phosphorylated by CheA. Phosphorylation of the N-terminal regulatory domain activates the methylesterase activity.

It localises to the cytoplasm. It catalyses the reaction [protein]-L-glutamate 5-O-methyl ester + H2O = L-glutamyl-[protein] + methanol + H(+). The enzyme catalyses L-glutaminyl-[protein] + H2O = L-glutamyl-[protein] + NH4(+). Functionally, involved in chemotaxis. Part of a chemotaxis signal transduction system that modulates chemotaxis in response to various stimuli. Catalyzes the demethylation of specific methylglutamate residues introduced into the chemoreceptors (methyl-accepting chemotaxis proteins or MCP) by CheR. Also mediates the irreversible deamidation of specific glutamine residues to glutamic acid. This chain is Protein-glutamate methylesterase/protein-glutamine glutaminase 1, found in Caulobacter vibrioides (strain ATCC 19089 / CIP 103742 / CB 15) (Caulobacter crescentus).